Reading from the N-terminus, the 154-residue chain is Golgi-associated plant pathogenesis-related protein 1 (154 aa).

The segment at 1 to 21 is disordered; the sequence is MGKSASKQFHNEVLKAHNEYR. Glycine 2 is lipidated: N-myristoyl glycine. Positions 9–21 are enriched in basic and acidic residues; that stretch reads FHNEVLKAHNEYR. In terms of domain architecture, SCP spans 14–132; it reads LKAHNEYRQK…SDGSSFVVAR (119 aa). Residues 30–53 adopt a coiled-coil conformation; the sequence is KLCKNLNREAQQYSEALASTRILK. The interaction with CAV1 stretch occupies residues 91 to 98; sequence NFQQPGFT.

It belongs to the CRISP family. In terms of assembly, homodimer. Interacts with CAV1. Highest expression in lung and peripheral leukocytes, and minor expression in liver and kidney.

The protein localises to the golgi apparatus membrane. This Homo sapiens (Human) protein is Golgi-associated plant pathogenesis-related protein 1 (GLIPR2).